A 391-amino-acid polypeptide reads, in one-letter code: S-adenosylmethionine synthase (391 aa).

Residue histidine 19 participates in ATP binding. Aspartate 21 contacts Mg(2+). A K(+)-binding site is contributed by glutamate 47. L-methionine contacts are provided by glutamate 60 and glutamine 103. Residues 103–113 (QSADIAQGVDR) form a flexible loop region. ATP-binding positions include 168-170 (DGK), 236-237 (RF), aspartate 245, 251-252 (RK), alanine 268, and lysine 272. Aspartate 245 serves as a coordination point for L-methionine. Lysine 276 contacts L-methionine.

Belongs to the AdoMet synthase family. In terms of assembly, homotetramer; dimer of dimers. It depends on Mg(2+) as a cofactor. K(+) is required as a cofactor.

The protein localises to the cytoplasm. It carries out the reaction L-methionine + ATP + H2O = S-adenosyl-L-methionine + phosphate + diphosphate. The protein operates within amino-acid biosynthesis; S-adenosyl-L-methionine biosynthesis; S-adenosyl-L-methionine from L-methionine: step 1/1. Catalyzes the formation of S-adenosylmethionine (AdoMet) from methionine and ATP. The overall synthetic reaction is composed of two sequential steps, AdoMet formation and the subsequent tripolyphosphate hydrolysis which occurs prior to release of AdoMet from the enzyme. The protein is S-adenosylmethionine synthase of Nitratidesulfovibrio vulgaris (strain ATCC 29579 / DSM 644 / CCUG 34227 / NCIMB 8303 / VKM B-1760 / Hildenborough) (Desulfovibrio vulgaris).